We begin with the raw amino-acid sequence, 196 residues long: Carnitine operon protein CaiE (196 aa).

A disordered region spans residues 173–196; that stretch reads TQPLRQMEENRPRLQGTTDVTPKR. The segment covering 187-196 has biased composition (polar residues); sequence QGTTDVTPKR.

The protein belongs to the transferase hexapeptide repeat family.

The protein operates within amine and polyamine metabolism; carnitine metabolism. In terms of biological role, overproduction of CaiE stimulates the activity of CaiB and CaiD. The sequence is that of Carnitine operon protein CaiE from Escherichia coli O6:K15:H31 (strain 536 / UPEC).